Reading from the N-terminus, the 269-residue chain is Glutamate racemase (269 aa).

Residues 14 to 15 (DS) and 46 to 47 (YS) each bind substrate. Cys-78 (proton donor/acceptor) is an active-site residue. Residue 79–80 (NT) coordinates substrate. Cys-189 functions as the Proton donor/acceptor in the catalytic mechanism. 190–191 (TH) provides a ligand contact to substrate.

It belongs to the aspartate/glutamate racemases family.

The catalysed reaction is L-glutamate = D-glutamate. It functions in the pathway cell wall biogenesis; peptidoglycan biosynthesis. Its function is as follows. Provides the (R)-glutamate required for cell wall biosynthesis. This chain is Glutamate racemase, found in Haemophilus influenzae (strain 86-028NP).